A 115-amino-acid polypeptide reads, in one-letter code: Small ribosomal subunit protein bS16 (115 aa).

The tract at residues 81–115 is disordered; that stretch reads GLAPKPTYNEQPKKSAPKAKAQERAKAAADAAAAA.

The protein belongs to the bacterial ribosomal protein bS16 family.

The chain is Small ribosomal subunit protein bS16 from Gluconobacter oxydans (strain 621H) (Gluconobacter suboxydans).